The primary structure comprises 163 residues: Inner membrane protein YcdZ (163 aa).

The Cytoplasmic segment spans residues 1–2 (MN). The helical transmembrane segment at 3–23 (ILLSIAITTGILSGIWGWVAV) threads the bilayer. Ser-24 is a topological domain (periplasmic). Residues 25 to 45 (LGLLSWAGFLGCTAYFACPQG) traverse the membrane as a helical segment. The Cytoplasmic portion of the chain corresponds to 46-48 (GLK). A helical transmembrane segment spans residues 49–69 (GLAISAATLLSGVVWAMVIIY). Residues 70-71 (GS) lie on the Periplasmic side of the membrane. A helical membrane pass occupies residues 72–92 (ALAPHLEILGYVITGIVAFLM). Topologically, residues 93–98 (CIQAKQ) are cytoplasmic. A helical transmembrane segment spans residues 99–119 (LLLSFVPGTFIGACATFAGQG). The Periplasmic segment spans residues 120–122 (DWK). A helical membrane pass occupies residues 123 to 143 (LVLPSLALGLIFGYAMKNSGL). Residues 144–163 (WLAARSAKTAHREQEIKNKA) lie on the Cytoplasmic side of the membrane.

To E.coli YahC.

The protein resides in the cell inner membrane. This chain is Inner membrane protein YcdZ (ycdZ), found in Escherichia coli (strain K12).